We begin with the raw amino-acid sequence, 164 residues long: Elicitin-like protein 2 (164 aa).

The first 22 residues, 1–22 (MFSKTLVVLAAVAAVTVNGLTA), serve as a signal peptide directing secretion. Intrachain disulfides connect cysteine 25–cysteine 91, cysteine 47–cysteine 76, and cysteine 71–cysteine 118. Residues 121-164 (ISGGGSTPTTAPPSGTTPTTPTTAPPTGTTPGVTPSPTTPKPAC) form a disordered region. Residues 127–156 (TPTTAPPSGTTPTTPTTAPPTGTTPGVTPS) show a composition bias toward low complexity.

Belongs to the elicitin family.

Its subcellular location is the secreted. In terms of biological role, induces local and distal defense responses (incompatible hypersensitive reaction) in plants from the solanaceae and cruciferae families. Elicits leaf necrosis and causes the accumulation of pathogenesis-related proteins. Might interact with the lipidic molecules of the plasma membrane. The chain is Elicitin-like protein 2 (POD-2) from Pythium oligandrum (Mycoparasitic fungus).